The chain runs to 238 residues: Probable transcriptional regulatory protein MGAS2096_Spy0287 (238 aa).

Belongs to the TACO1 family. YeeN subfamily.

The protein resides in the cytoplasm. This chain is Probable transcriptional regulatory protein MGAS2096_Spy0287, found in Streptococcus pyogenes serotype M12 (strain MGAS2096).